A 249-amino-acid chain; its full sequence is General transcription factor IIF subunit 2 (249 aa).

N-acetylalanine is present on A2. An N6-acetyllysine mark is found at K22, K33, and K137. Position 142 is a phosphoserine (S142). 2 residues coordinate DNA: G227 and H229. S248 is modified (phosphoserine).

The protein belongs to the TFIIF beta subunit family. In terms of assembly, heterodimer of an alpha and a beta subunit. Interacts with HTATSF1 and GPBP1. Interacts with URI1. Interacts with GTF2B (via N-terminus); this interaction is inhibited in presence of GTF2F1. Part of TBP-based Pol II pre-initiation complex (PIC), in which Pol II core assembles with general transcription factors and other specific initiation factors including GTF2E1, GTF2E2, GTF2F1, GTF2F2, TCEA1, ERCC2, ERCC3, GTF2H2, GTF2H3, GTF2H4, GTF2H5, GTF2A1, GTF2A2, GTF2B and TBP; this large multi-subunit PIC complex mediates DNA unwinding and targets Pol II core to the transcription start site where the first phosphodiester bond forms.

Its subcellular location is the nucleus. TFIIF is a general transcription initiation factor that binds to RNA polymerase II and helps to recruit it to the initiation complex in collaboration with TFIIB. In Bos taurus (Bovine), this protein is General transcription factor IIF subunit 2 (GTF2F2).